The following is a 107-amino-acid chain: Metallothionein-1 (107 aa).

It belongs to the metallothionein superfamily. Type 7 family.

Its function is as follows. The metallothioneins are involved in the cellular sequestration of toxic metal ions. Binds 12 cadmium ions per molecule. In Tetrahymena thermophila, this protein is Metallothionein-1.